Here is a 106-residue protein sequence, read N- to C-terminus: NADH-quinone oxidoreductase subunit K (106 aa).

A run of 3 helical transmembrane segments spans residues 8–28, 35–55, and 66–86; these read IGIE…IFGV, IIMF…FVAF, and VFVF…LAIL.

This sequence belongs to the complex I subunit 4L family. NDH-1 is composed of 14 different subunits. Subunits NuoA, H, J, K, L, M, N constitute the membrane sector of the complex.

The protein resides in the cell inner membrane. The catalysed reaction is a quinone + NADH + 5 H(+)(in) = a quinol + NAD(+) + 4 H(+)(out). NDH-1 shuttles electrons from NADH, via FMN and iron-sulfur (Fe-S) centers, to quinones in the respiratory chain. The immediate electron acceptor for the enzyme in this species is believed to be a menaquinone. Couples the redox reaction to proton translocation (for every two electrons transferred, four hydrogen ions are translocated across the cytoplasmic membrane), and thus conserves the redox energy in a proton gradient. The protein is NADH-quinone oxidoreductase subunit K of Flavobacterium psychrophilum (strain ATCC 49511 / DSM 21280 / CIP 103535 / JIP02/86).